The chain runs to 367 residues: Aspartate beta-hydroxylase domain-containing protein 1 (367 aa).

The disordered stretch occupies residues 1–27 (MWRGSSAGGSQGAAMEGTGGELGGQGN). Residues 1 to 49 (MWRGSSAGGSQGAAMEGTGGELGGQGNWGLEDAPGLLARASLPIMPAWP) are Cytoplasmic-facing. The helical transmembrane segment at 50–72 (LPLASSALTLLLGALTSLFLWYC) threads the bilayer. Topologically, residues 73–367 (YRLGSQDMQA…ALDFVFAPDP (295 aa)) are lumenal. Residues 88–122 (RAGAVGGRPGGCSEAGRPSPGRSGESGEGPRTEGL) are disordered. At Ser-106 the chain carries Phosphoserine.

Belongs to the aspartyl/asparaginyl beta-hydroxylase family.

The protein localises to the membrane. The chain is Aspartate beta-hydroxylase domain-containing protein 1 (ASPHD1) from Bos taurus (Bovine).